Here is a 279-residue protein sequence, read N- to C-terminus: Movement protein (279 aa).

Low complexity predominate over residues 256-266 (PPIAIGSPSAS). The interval 256–279 (PPIAIGSPSASRNNSFRSQVVNGL) is disordered. Over residues 267 to 279 (RNNSFRSQVVNGL) the composition is skewed to polar residues.

This sequence belongs to the cucumovirus movement protein family.

The protein resides in the host cell junction. The protein localises to the host plasmodesma. Its function is as follows. Transports viral genome to neighboring plant cells directly through plasmosdesmata, without any budding. The movement protein allows efficient cell to cell propagation, by bypassing the host cell wall barrier. Acts by forming a tubular structure at the host plasmodesmata, enlarging it enough to allow free passage of virion capsids. The chain is Movement protein from Cucumis sativus (Cucumber).